The chain runs to 207 residues: Ribonuclease HII (207 aa).

The RNase H type-2 domain occupies 1–207 (MDVLGIDEAG…ATVEKMKNSQ (207 aa)). Residues Asp7, Glu8, and Asp105 each contribute to the a divalent metal cation site.

The protein belongs to the RNase HII family. Mn(2+) serves as cofactor. The cofactor is Mg(2+).

It localises to the cytoplasm. The catalysed reaction is Endonucleolytic cleavage to 5'-phosphomonoester.. In terms of biological role, endonuclease that specifically degrades the RNA of RNA-DNA hybrids. The sequence is that of Ribonuclease HII from Methanobrevibacter smithii (strain ATCC 35061 / DSM 861 / OCM 144 / PS).